We begin with the raw amino-acid sequence, 402 residues long: Mediator of RNA polymerase II transcription subunit 27 (402 aa).

Over residues 1–23 the composition is skewed to polar residues; the sequence is MQTLHQSQLLQNPAEAANNQSES. The interval 1–30 is disordered; that stretch reads MQTLHQSQLLQNPAEAANNQSESDAPPKQV. Positions 28 to 49 form a coiled coil; sequence KQVAQAMERLNQAARVIADIRL.

Belongs to the Mediator complex subunit 27 family. Component of the Mediator complex.

It is found in the nucleus. Component of the Mediator complex, a coactivator involved in the regulated transcription of nearly all RNA polymerase II-dependent genes. Mediator functions as a bridge to convey information from gene-specific regulatory proteins to the basal RNA polymerase II transcription machinery. The Mediator complex, having a compact conformation in its free form, is recruited to promoters by direct interactions with regulatory proteins and serves for the assembly of a functional preinitiation complex with RNA polymerase II and the general transcription factors. This chain is Mediator of RNA polymerase II transcription subunit 27 (MED27), found in Arabidopsis thaliana (Mouse-ear cress).